We begin with the raw amino-acid sequence, 58 residues long: Ribulose bisphosphate carboxylase large chain (58 aa).

Positions 1 to 2 (MS) are excised as a propeptide. Position 3 is an N-acetylproline (Pro-3). The residue at position 14 (Lys-14) is an N6,N6,N6-trimethyllysine.

Belongs to the RuBisCO large chain family. Type I subfamily. In terms of assembly, heterohexadecamer of 8 large chains and 8 small chains.

It is found in the plastid. Its subcellular location is the chloroplast. The enzyme catalyses 2 (2R)-3-phosphoglycerate + 2 H(+) = D-ribulose 1,5-bisphosphate + CO2 + H2O. The catalysed reaction is D-ribulose 1,5-bisphosphate + O2 = 2-phosphoglycolate + (2R)-3-phosphoglycerate + 2 H(+). RuBisCO catalyzes two reactions: the carboxylation of D-ribulose 1,5-bisphosphate, the primary event in carbon dioxide fixation, as well as the oxidative fragmentation of the pentose substrate in the photorespiration process. Both reactions occur simultaneously and in competition at the same active site. In Rosa damascena (Damask rose), this protein is Ribulose bisphosphate carboxylase large chain (rbcL).